Here is a 269-residue protein sequence, read N- to C-terminus: Homocitrate synthase subunit alpha (269 aa).

The 253-residue stretch at 3-255 (INIVDTTLRD…IYTGDFEDII (253 aa)) folds into the Pyruvate carboxyltransferase domain.

The protein belongs to the alpha-IPM synthase/homocitrate synthase family. Heterodimer of an alpha and an omega chain.

It catalyses the reaction acetyl-CoA + 2-oxoglutarate + H2O = (2R)-homocitrate + CoA + H(+). Its function is as follows. This protein is a Fe-Mo-cofactor biosynthetic component. This Clostridium pasteurianum protein is Homocitrate synthase subunit alpha (nifV-ALPHA).